The primary structure comprises 301 residues: MKIAILSRDAKLYSTRRLMEAARANGHEVQVLDPLRCYMNITSAKPTIHYKGKELTGFDAVIPRIGASITFYGTAVLRQFEMMGVFPVNESVAISRARDKLRSLQLLSRKGVGLPVTGFAHSPDDIDDLLAEVQGAPLVVKLLEGTQGVGVVLAETRKAAESVIQAFMGLRQNILVQEFVKEAGGTDLRCFVIGGKVVAAMQRRAKEGEFRSNLHRGGSAEPVKLTPQERATAVKAAKVIGLNVCGVDILRSSHGPVVIEVNASPGLEGIETASGVDVAGRIVSFIEQNARPHRTQTRGKG.

The ATP-grasp domain maps to 104–287 (LQLLSRKGVG…VAGRIVSFIE (184 aa)). Residues Lys-141, 178–179 (EF), Asp-187, and 211–213 (RSN) contribute to the ATP site. 3 residues coordinate Mg(2+): Asp-248, Glu-260, and Asn-262. Positions 248, 260, and 262 each coordinate Mn(2+).

The protein belongs to the RimK family. Mg(2+) is required as a cofactor. Mn(2+) serves as cofactor.

The chain is Probable alpha-L-glutamate ligase from Thioalkalivibrio sulfidiphilus (strain HL-EbGR7).